A 316-amino-acid polypeptide reads, in one-letter code: Polyprenyl transferase ausN (316 aa).

A run of 9 helical transmembrane segments spans residues 45 to 65 (VVGVAYTAAISPVTLPATFLL), 69 to 89 (VILSLWGFCIRSAGCAWNDLI), 108 to 128 (GAVSPSGAALLTAFMFGCGGS), 129 to 149 (LLLLLPSQCAFEAAIVVFFAL), 163 to 183 (LILTNIAWAIPMAMSSLDMNP), 188 to 208 (IPTLAMSFSIASVIVMIDIVY), 233 to 253 (DQIAYSLFFSGTLSLLAGGIL), 256 to 276 (LGIPFLIFSVGGHFVGFLRFL), and 296 to 316 (SCLLATVFLVFGLFFEYCVRL).

This sequence belongs to the UbiA prenyltransferase family. Mg(2+) serves as cofactor.

The protein resides in the membrane. The catalysed reaction is 3,5-dimethylorsellinate + (2E,6E)-farnesyl diphosphate = (3R)-3-farnesyl-6-hydroxy-2,3,5-trimethyl-4-oxocyclohexa-1,5-diene-1-carboxylate + diphosphate + H(+). The protein operates within secondary metabolite biosynthesis; terpenoid biosynthesis. Functionally, polyprenyl transferase; part of the gene cluster A that mediates the biosynthesis of the fungal meroterpenoid acetoxydehydroaustin. The first step of the pathway is the synthesis of 3,5-dimethylorsellinic acid by the polyketide synthase ausA. 3,5-dimethylorsellinic acid is then prenylated by the polyprenyl transferase ausN. Further epoxidation by the FAD-dependent monooxygenase ausM and cyclization by the probable terpene cyclase ausL lead to the formation of protoaustinoid A. Protoaustinoid A is then oxidized to spiro-lactone preaustinoid A3 by the combined action of the FAD-binding monooxygenases ausB and ausC, and the dioxygenase ausE. Acid-catalyzed keto-rearrangement and ring contraction of the tetraketide portion of preaustinoid A3 by ausJ lead to the formation of preaustinoid A4. The aldo-keto reductase ausK, with the help of ausH, is involved in the next step by transforming preaustinoid A4 into isoaustinone which is in turn hydroxylated by the P450 monooxygenase ausI to form austinolide. The cytochrome P450 monooxygenase ausG then modifies austinolide to austinol. Austinol is further acetylated to austin by the O-acetyltransferase ausP, which spontaneously changes to dehydroaustin. The cytochrome P450 monooxygenase then converts dehydroaustin is into 7-dehydrodehydroaustin. The hydroxylation catalyzed by ausR permits the second O-acetyltransferase ausQ to add an additional acetyl group to the molecule, leading to the formation of acetoxydehydroaustin. Due to genetic rearrangements of the clusters and the subsequent loss of some enzymes, the end product of the Penicillium brasilianum austinoid biosynthesis clusters is acetoxydehydroaustin. The polypeptide is Polyprenyl transferase ausN (Penicillium brasilianum).